A 546-amino-acid chain; its full sequence is DDB1- and CUL4-associated factor 11 (546 aa).

The segment covering 1 to 10 (MGSRNSSSAG) has biased composition (polar residues). A disordered region spans residues 1 to 40 (MGSRNSSSAGTGSGDPSEGLPRRGAGLRRSEEEEEEDEDV). Serine 73 and serine 75 each carry phosphoserine. The interval 79–100 (HDSAWDGRLGDRYNPPVDATPD) is disordered. A compositionally biased stretch (basic and acidic residues) spans 80–89 (DSAWDGRLGD). WD repeat units lie at residues 170-210 (TYSQ…RKFK), 216-258 (DVGW…TALD), 263-302 (ERRF…RTLQ), 305-345 (SHED…EDDP), 353-392 (GHQD…SREG), 435-480 (GVLH…KKLT), and 481-520 (THKA…YFQD). Residues 521-546 (DMPESEEHPSTPAPMSHPSTAFSSPQ) form a disordered region. Over residues 537–546 (HPSTAFSSPQ) the composition is skewed to polar residues.

In terms of assembly, interacts with DDB1 and CUL4A.

Its pathway is protein modification; protein ubiquitination. Functionally, may function as a substrate receptor for CUL4-DDB1 E3 ubiquitin-protein ligase complex. The chain is DDB1- and CUL4-associated factor 11 (DCAF11) from Bos taurus (Bovine).